The primary structure comprises 279 residues: Ribosomal RNA small subunit methyltransferase I (279 aa).

This sequence belongs to the methyltransferase superfamily. RsmI family.

The protein resides in the cytoplasm. It catalyses the reaction cytidine(1402) in 16S rRNA + S-adenosyl-L-methionine = 2'-O-methylcytidine(1402) in 16S rRNA + S-adenosyl-L-homocysteine + H(+). Functionally, catalyzes the 2'-O-methylation of the ribose of cytidine 1402 (C1402) in 16S rRNA. The polypeptide is Ribosomal RNA small subunit methyltransferase I (Synechocystis sp. (strain ATCC 27184 / PCC 6803 / Kazusa)).